The primary structure comprises 122 residues: Large ribosomal subunit protein uL14c (122 aa).

Belongs to the universal ribosomal protein uL14 family. In terms of assembly, part of the 50S ribosomal subunit.

It localises to the plastid. Its subcellular location is the chloroplast. In terms of biological role, binds to 23S rRNA. This Jasminum nudiflorum (Winter jasmine) protein is Large ribosomal subunit protein uL14c.